The sequence spans 1488 residues: MIERGKFRSLTLINWNGFFARTFDLDELVTTLSGGNGAGKSTTMAAFVTALIPDLTLLHFRNTTEAGATSGSRDKGLHGKLKAGVCYSMLDTINSRHQRVVVGVRLQQVAGRDRKVDIKPFAIQGLPMSVQPTQLVTETLNERQARVLSLAELKDKLDEMEGVQFKQFNSITDYHSLMFDLGIIARRLRSASDRSKFYRLIEASLYGGISSAITRSLRDYLLPENSGVRKAFQDMEAALRENRLTLEAIRVTQSDRDLFKHLISEATDYVAADYMRHANERRVHLDQALAFRRELYTSRKQLAAEQYKHVDMARELGEHNGAEGSLEADYQAASDHLNLVQTALRQQEKIERYEADLEELQIRLEEQNEVVAEAAEMQDENEARAEAAELEVDELKSQLADYQQALDVQQTRAIQYNQAISALARAKELCHLPDLTPESAAEWLDTFQAKEQEATEKLLSLEQKMSVAQTAHSQFEQAYQLVAAINGPLARSEAWDVARELLRDGVNQRHLAEQVQPLRMRLSELEQRLREQQEAERLLAEFCKRQGKNFDIDELEALHQELEARIASLSDSVSSASEQRMALRQEQEQLQSRIQHLMQRAPVWLAAQNSLNQLSEQCGEEFTSSQEVTEYLQQLLEREREAIVERDEVGARKNAVDEEIERLSQPGGAEDQRLNALAERFGGVLLSEIYDDVSLEDAPYFSALYGPSRHAIVVPDLSQIAEQLEGLTDCPEDLYLIEGDPQSFDDSVFSVDELEKAVVVKIADRQWRYSRFPSLPIFGRAARENRIESLHAEREVLSERFATLSFDVQKTQRLHQAFSRFIGSHLSVAFEDDPEAEIRRLNGRRVELERALATHESDNQQQRLQFEQAKEGVSALNRLLPRLNLLADETLADRGDEIQERLDEAQEAARFVQQYGNQLAKLEPVVSVLQSDPEQFEQLKEDYAWSQQMQRDARQQAFALAEVVERRAHFSYSDSAEMLSGNSDLNEKLRQRLEQAEAERTRAREALRSHAAQLSQYSQVLVSLKSSYDTKKELLNDLQRELQDIGVRADSGAEERARQRRDELHAQLSNNRSRRNQLEKALTFCEAEMENLTRKLRKLERDYHEMREQVVTAKAGWCAVMRMVKDNGVERRLHRRELAYLSADELRSMSDKALGALRLAVADNEHLRDVLRLSEDPKRPERKIQFFVAVYQHLRERIRQDIIRTDDPVEAIEQMEIELSRLTEELTSREQKLAISSRSVANIIRKTIQREQNRIRMLNQGLQSVSFGQVNSVRLNVNVRETHATLLDVLSEQQEQHQDLFNSNRLTFSEALAKLYQRLNPQIDMGQRTPQTIGEELLDYRNYLEMEVEVNRGSDGWLRAESGALSTGEAIGTGMSILVMVVQSWEDEARRLRGKDISPCRLLFLDEAARLDARSIATLFELCERLQMQLIIAAPENISPEKGTTYKLVRKVFQNTEHVHVVGLRGFAPQLPETLPGTQTEDTPSEAS.

Residue 34–41 coordinates ATP; sequence GGNGAGKS. Coiled coils occupy residues 326 to 418, 444 to 472, and 509 to 602; these read LEAD…QYNQ, LDTFQAKEQEATEKLLSLEQKMSVAQTAH, and RHLA…QRAP. A flexible hinge region spans residues 666–783; sequence PGGAEDQRLN…SLPIFGRAAR (118 aa). Coiled-coil stretches lie at residues 835 to 923, 977 to 1116, and 1209 to 1265; these read EAEI…AKLE, EMLS…AKAG, and VEAI…LQSV. The segment at 1049-1074 is disordered; it reads ADSGAEERARQRRDELHAQLSNNRSR. Positions 1051–1065 are enriched in basic and acidic residues; that stretch reads SGAEERARQRRDELH.

This sequence belongs to the SMC family. MukB subfamily. Homodimerization via its hinge domain. Binds to DNA via its C-terminal region. Interacts, and probably forms a ternary complex, with MukE and MukF via its C-terminal region. The complex formation is stimulated by calcium or magnesium. Interacts with tubulin-related protein FtsZ.

The protein resides in the cytoplasm. Its subcellular location is the nucleoid. Plays a central role in chromosome condensation, segregation and cell cycle progression. Functions as a homodimer, which is essential for chromosome partition. Involved in negative DNA supercoiling in vivo, and by this means organize and compact chromosomes. May achieve or facilitate chromosome segregation by condensation DNA from both sides of a centrally located replisome during cell division. This is Chromosome partition protein MukB from Salmonella paratyphi A (strain ATCC 9150 / SARB42).